Here is a 205-residue protein sequence, read N- to C-terminus: NADH-quinone oxidoreductase subunit J (205 aa).

5 helical membrane passes run 1 to 21 (MPIF…CVVL), 26 to 46 (VYSV…MILL), 54 to 74 (LLIV…IMML), 89 to 109 (LSLS…TVIL), and 142 to 162 (FMLP…SCIT).

Belongs to the complex I subunit 6 family.

Its subcellular location is the cell membrane. It catalyses the reaction a quinone + NADH + 5 H(+)(in) = a quinol + NAD(+) + 4 H(+)(out). In terms of biological role, NDH-1 shuttles electrons from NADH, via FMN and iron-sulfur (Fe-S) centers, to quinones in the respiratory chain. Couples the redox reaction to proton translocation (for every two electrons transferred, four hydrogen ions are translocated across the cytoplasmic membrane), and thus conserves the redox energy in a proton gradient. This chain is NADH-quinone oxidoreductase subunit J (nuoJ), found in Rickettsia typhi (strain ATCC VR-144 / Wilmington).